The sequence spans 215 residues: LexA repressor (215 aa).

Positions 28 to 48 (RAEIAAELGFSSPNAAEEHLR) form a DNA-binding region, H-T-H motif. Residues Ser133 and Lys170 each act as for autocatalytic cleavage activity in the active site.

The protein belongs to the peptidase S24 family. As to quaternary structure, homodimer.

The catalysed reaction is Hydrolysis of Ala-|-Gly bond in repressor LexA.. Its function is as follows. Represses a number of genes involved in the response to DNA damage (SOS response), including recA and lexA. In the presence of single-stranded DNA, RecA interacts with LexA causing an autocatalytic cleavage which disrupts the DNA-binding part of LexA, leading to derepression of the SOS regulon and eventually DNA repair. This is LexA repressor from Burkholderia vietnamiensis (strain G4 / LMG 22486) (Burkholderia cepacia (strain R1808)).